The primary structure comprises 344 residues: UDP-3-O-acylglucosamine N-acyltransferase (344 aa).

Histidine 248 functions as the Proton acceptor in the catalytic mechanism.

This sequence belongs to the transferase hexapeptide repeat family. LpxD subfamily. Homotrimer.

It catalyses the reaction a UDP-3-O-[(3R)-3-hydroxyacyl]-alpha-D-glucosamine + a (3R)-hydroxyacyl-[ACP] = a UDP-2-N,3-O-bis[(3R)-3-hydroxyacyl]-alpha-D-glucosamine + holo-[ACP] + H(+). The protein operates within bacterial outer membrane biogenesis; LPS lipid A biosynthesis. Catalyzes the N-acylation of UDP-3-O-acylglucosamine using 3-hydroxyacyl-ACP as the acyl donor. Is involved in the biosynthesis of lipid A, a phosphorylated glycolipid that anchors the lipopolysaccharide to the outer membrane of the cell. The polypeptide is UDP-3-O-acylglucosamine N-acyltransferase (Prochlorococcus marinus (strain MIT 9515)).